Here is a 74-residue protein sequence, read N- to C-terminus: Protein RALF-like 25 (74 aa).

An N-terminal signal peptide occupies residues 1–22 (MKTFMIILLVICSILIVGRVEA). Cystine bridges form between C35-C44 and C62-C68.

It belongs to the plant rapid alkalinization factor (RALF) family.

It is found in the secreted. In terms of biological role, cell signaling peptide that may regulate plant stress, growth, and development. Mediates a rapid alkalinization of extracellular space by mediating a transient increase in the cytoplasmic Ca(2+) concentration leading to a calcium-dependent signaling events through a cell surface receptor and a concomitant activation of some intracellular mitogen-activated protein kinases. The protein is Protein RALF-like 25 (RALFL25) of Arabidopsis thaliana (Mouse-ear cress).